Consider the following 360-residue polypeptide: Putative F-box protein At3g16210 (360 aa).

An F-box domain is found at 1–48 (MSKFLPEELAIEILVRLSMKDLARFRCVCKTWRDLINDPGFTETYRDM).

This is Putative F-box protein At3g16210 from Arabidopsis thaliana (Mouse-ear cress).